Consider the following 147-residue polypeptide: Phosphoribosyl-AMP cyclohydrolase (147 aa).

Asp91 contributes to the Mg(2+) binding site. A Zn(2+)-binding site is contributed by Cys92. Positions 93 and 95 each coordinate Mg(2+). Residues Cys109 and Cys116 each coordinate Zn(2+).

The protein belongs to the PRA-CH family. As to quaternary structure, homodimer. Mg(2+) serves as cofactor. It depends on Zn(2+) as a cofactor.

The protein resides in the cytoplasm. The catalysed reaction is 1-(5-phospho-beta-D-ribosyl)-5'-AMP + H2O = 1-(5-phospho-beta-D-ribosyl)-5-[(5-phospho-beta-D-ribosylamino)methylideneamino]imidazole-4-carboxamide. The protein operates within amino-acid biosynthesis; L-histidine biosynthesis; L-histidine from 5-phospho-alpha-D-ribose 1-diphosphate: step 3/9. Catalyzes the hydrolysis of the adenine ring of phosphoribosyl-AMP. This Rhodopseudomonas palustris (strain BisB18) protein is Phosphoribosyl-AMP cyclohydrolase.